The sequence spans 227 residues: UPF0758 protein Psyc_1834 (227 aa).

One can recognise an MPN domain in the interval Gly102–Ala224. Residues His173, His175, and Asp186 each coordinate Zn(2+). Positions His173 to Asp186 match the JAMM motif motif.

The protein belongs to the UPF0758 family.

The sequence is that of UPF0758 protein Psyc_1834 from Psychrobacter arcticus (strain DSM 17307 / VKM B-2377 / 273-4).